A 131-amino-acid chain; its full sequence is Single-stranded DNA-binding protein 1 (131 aa).

One can recognise an SSB domain in the interval 1–103 (MYNKVIAIGR…VLCQSFQLLE (103 aa)).

In terms of assembly, homotetramer.

This Streptococcus pyogenes serotype M6 (strain ATCC BAA-946 / MGAS10394) protein is Single-stranded DNA-binding protein 1 (ssb1).